Reading from the N-terminus, the 371-residue chain is Putative glutamate--cysteine ligase 2 (371 aa).

Belongs to the glutamate--cysteine ligase type 2 family. YbdK subfamily.

The enzyme catalyses L-cysteine + L-glutamate + ATP = gamma-L-glutamyl-L-cysteine + ADP + phosphate + H(+). ATP-dependent carboxylate-amine ligase which exhibits weak glutamate--cysteine ligase activity. This is Putative glutamate--cysteine ligase 2 from Nitrosospira multiformis (strain ATCC 25196 / NCIMB 11849 / C 71).